The following is a 358-amino-acid chain: Transcription factor bHLH67 (358 aa).

Positions N125–Q176 are disordered. The span at T127–S137 shows a compositional bias: low complexity. The span at E157–P166 shows a compositional bias: basic residues. The region spanning N175–L226 is the bHLH domain.

As to quaternary structure, homodimer. As to expression, expressed constitutively in roots, leaves, stems, and flowers.

The protein localises to the nucleus. The chain is Transcription factor bHLH67 (BHLH67) from Arabidopsis thaliana (Mouse-ear cress).